Consider the following 1717-residue polypeptide: DNA-directed RNA polymerase I subunit RPA1 (1717 aa).

Positions 64, 67, 74, 77, 104, and 107 each coordinate Zn(2+). Positions 110–201 (LTCPRAAIYL…VAQFWKTHMA (92 aa)) are clamp. The Zn(2+) site is built by cysteine 205 and cysteine 208. Residues 327–433 (FTNGQTVNLQ…IRQILEKKEG (107 aa)) form a clamp region. The interval 410–423 (DSEMDKLMLEKYPG) is rudder. Residues lysine 431, arginine 436, and arginine 443 each coordinate DNA. The interval 475–549 (YPQPVTPWNV…QGTKVVCRHV (75 aa)) is involved in RRN3 binding to Pol I complex. Arginine 559 serves as a coordination point for RNA. The Mg(2+) site is built by aspartate 595, aspartate 597, and aspartate 599. Residue aspartate 599 coordinates RNA. The funnel stretch occupies residues 812–890 (KPNADVVRQR…NEINKACMPL (79 aa)). The tract at residues 967 to 1008 (RPPEFFFHCMAGREGLVDTAVKTSRSGYLQRCIIKHLEGLVI) is bridging helix. A mediates the interaction with TOP2A region spans residues 1067 to 1162 (ADPQKVLGHI…SLSVWRPDIY (96 aa)). The trigger loop stretch occupies residues 1214-1255 (PGEAVGLLAAQSIGEPSTQMTLNTFHFAGRGEMNVTLGIPRL). Arginine 1256 lines the DNA pocket. The segment at 1372-1493 (RNVNSRRATQ…RRHSRPQGAE (122 aa)) is disordered. Basic and acidic residues predominate over residues 1380–1397 (TQKDLNDTEDSGRSQREE). At serine 1393 the chain carries Phosphoserine. 2 stretches are compositionally biased toward acidic residues: residues 1398 to 1419 (ERDEEEEGNIVDAEAEEGDADA) and 1429 to 1450 (EEEVDYESEEEGEEEEEEEVQE). Basic and acidic residues predominate over residues 1452–1464 (GNIKGDGVHQGHE). A compositionally biased stretch (acidic residues) spans 1465-1477 (PDEEEHLGLEEEE).

This sequence belongs to the RNA polymerase beta' chain family. In terms of assembly, component of the RNA polymerase I (Pol I) complex consisting of 13 subunits: a ten-subunit catalytic core composed of POLR1A/RPA1, POLR1B/RPA2, POLR1C/RPAC1, POLR1D/RPAC2, POLR1H/RPA12, POLR2E/RPABC1, POLR2F/RPABC2, POLR2H/RPABC3, POLR2K/RPABC4 and POLR2L/RPABC5; a mobile stalk subunit POLR1F/RPA43 protruding from the core and additional subunits homologous to general transcription factors POLR1E/RPA49 and POLR1G/RPA34. Part of Pol I pre-initiation complex (PIC), in which Pol I core assembles with RRN3 and promoter-bound UTBF and SL1/TIF-IB complex. Interacts (via dock II domain) with TOP2A; this interaction may assist Pol I transcription initiation by releasing supercoils occurring during DNA unwinding. Interacts with CAVIN1; this interaction induces the dissociation of Pol I complex paused at rDNA terminator sequences. Interacts with MYO1C. Interacts with ERBB2. Interacts with DDX11. Interacts with RECQL5. Requires Mg(2+) as cofactor. Phosphorylated.

It localises to the nucleus. The protein resides in the nucleolus. It is found in the chromosome. It carries out the reaction RNA(n) + a ribonucleoside 5'-triphosphate = RNA(n+1) + diphosphate. Catalytic core component of RNA polymerase I (Pol I), a DNA-dependent RNA polymerase which synthesizes ribosomal RNA precursors using the four ribonucleoside triphosphates as substrates. Transcribes 47S pre-rRNAs from multicopy rRNA gene clusters, giving rise to 5.8S, 18S and 28S ribosomal RNAs. Pol I-mediated transcription cycle proceeds through transcription initiation, transcription elongation and transcription termination stages. During transcription initiation, Pol I pre-initiation complex (PIC) is recruited by the selectivity factor 1 (SL1/TIF-IB) complex bound to the core promoter that precedes an rDNA repeat unit. The PIC assembly bends the promoter favoring the formation of the transcription bubble and promoter escape. Once the polymerase has escaped from the promoter it enters the elongation phase during which RNA is actively polymerized, based on complementarity with the template DNA strand. Highly processive, assembles in structures referred to as 'Miller trees' where many elongating Pol I complexes queue and transcribe the same rDNA coding regions. At terminator sequences downstream of the rDNA gene, PTRF interacts with Pol I and halts Pol I transcription leading to the release of the RNA transcript and polymerase from the DNA. Forms Pol I active center together with the second largest subunit POLR1B/RPA2. Appends one nucleotide at a time to the 3' end of the nascent RNA, with POLR1A/RPA1 contributing a Mg(2+)-coordinating DxDGD motif, and POLR1B/RPA2 participating in the coordination of a second Mg(2+) ion and providing lysine residues believed to facilitate Watson-Crick base pairing between the incoming nucleotide and the template base. Typically, Mg(2+) ions direct a 5' nucleoside triphosphate to form a phosphodiester bond with the 3' hydroxyl of the preceding nucleotide of the nascent RNA, with the elimination of pyrophosphate. Has proofreading activity: Pauses and backtracks to allow the cleavage of a missincorporated nucleotide via POLR1H/RPA12. High Pol I processivity is associated with decreased transcription fidelity. This chain is DNA-directed RNA polymerase I subunit RPA1, found in Mus musculus (Mouse).